Consider the following 698-residue polypeptide: Methionine--tRNA ligase (698 aa).

The short motif at 18-28 is the 'HIGH' region element; the sequence is PYANGDLHVGH. Positions 149, 152, 161, and 165 each coordinate Zn(2+). An ATP-binding site is contributed by T350. The tract at residues 567-590 is disordered; the sequence is EAADAGDEEGEDEDEEPPAADLEP. The segment covering 570–584 has biased composition (acidic residues); that stretch reads DAGDEEGEDEDEEPP. The tRNA-binding domain maps to 600 to 698; that stretch reads DFQDLDIRVA…EDAEPGTKVQ (99 aa).

It belongs to the class-I aminoacyl-tRNA synthetase family. MetG type 1 subfamily. In terms of assembly, homodimer. It depends on Zn(2+) as a cofactor.

The protein localises to the cytoplasm. It carries out the reaction tRNA(Met) + L-methionine + ATP = L-methionyl-tRNA(Met) + AMP + diphosphate. Is required not only for elongation of protein synthesis but also for the initiation of all mRNA translation through initiator tRNA(fMet) aminoacylation. This is Methionine--tRNA ligase from Natronomonas pharaonis (strain ATCC 35678 / DSM 2160 / CIP 103997 / JCM 8858 / NBRC 14720 / NCIMB 2260 / Gabara) (Halobacterium pharaonis).